The primary structure comprises 242 residues: Ribosomal RNA large subunit methyltransferase E (242 aa).

S-adenosyl-L-methionine contacts are provided by G64, W66, D84, D100, and D125. K165 (proton acceptor) is an active-site residue. The disordered stretch occupies residues 198-242 (SSETFLLGRGLKKASPNGLDSRSGTAAEPAPLVPIGTNSMPANGD). Positions 233–242 (GTNSMPANGD) are enriched in polar residues.

Belongs to the class I-like SAM-binding methyltransferase superfamily. RNA methyltransferase RlmE family.

The protein resides in the cytoplasm. It catalyses the reaction uridine(2552) in 23S rRNA + S-adenosyl-L-methionine = 2'-O-methyluridine(2552) in 23S rRNA + S-adenosyl-L-homocysteine + H(+). Specifically methylates the uridine in position 2552 of 23S rRNA at the 2'-O position of the ribose in the fully assembled 50S ribosomal subunit. The polypeptide is Ribosomal RNA large subunit methyltransferase E (Verminephrobacter eiseniae (strain EF01-2)).